We begin with the raw amino-acid sequence, 367 residues long: Multifunctional tryptophan biosynthesis protein (367 aa).

Residues 7-201 enclose the Glutamine amidotransferase type-1 domain; it reads NVVMIDNYDS…LNVSGGYWEE (195 aa). 58-60 contributes to the L-glutamine binding site; it reads GPG. Cys86 (nucleophile; for GATase activity) is an active-site residue. L-glutamine-binding positions include Gln90 and 136 to 137; that span reads SL. Residues His175 and Glu177 each act as for GATase activity in the active site. The interval 209 to 367 is indole-3-glycerol phosphate synthase; sequence RKESILEKIY…TVLLIVKMLS (159 aa).

In terms of assembly, tetramer of two components I and two components II.

The enzyme catalyses chorismate + L-glutamine = anthranilate + pyruvate + L-glutamate + H(+). It carries out the reaction 1-(2-carboxyphenylamino)-1-deoxy-D-ribulose 5-phosphate + H(+) = (1S,2R)-1-C-(indol-3-yl)glycerol 3-phosphate + CO2 + H2O. Its pathway is amino-acid biosynthesis; L-tryptophan biosynthesis; L-tryptophan from chorismate: step 1/5. It participates in amino-acid biosynthesis; L-tryptophan biosynthesis; L-tryptophan from chorismate: step 4/5. The polypeptide is Multifunctional tryptophan biosynthesis protein (Pichia angusta (Yeast)).